The chain runs to 102 residues: Protein PDF (102 aa).

The first 24 residues, 1–24 (MARYTYLVALVLLAICCQWGYCGA), serve as a signal peptide directing secretion. Position 100 is an alanine amide (Ala100).

The protein belongs to the arthropod PDH family. Predominantly expressed in adult head. Expressed at higher level in males than in females. In adult brain, it is specifically expressed in the ventral lateral neurons (LNvs) as well as in 2-4 tritocerebral cells and 4-6 abdominal cells.

It localises to the secreted. Its function is as follows. Neuropeptide PDF is the main transmitter regulating circadian locomotor rhythms. Required to maintain behavioral rhythms under constant conditions by coordinating pacemaker interactions in the circadian system. Together with CCHa1, involved in regulating intensity and periodicity of daytime activity, possibly by modulating rhythmic expression of circadian protein PER/period in a subset of clock neurons, but not TIM/timeless. Acts on small and large ventral lateral neurons to control sleep and regulates the state transition from sleep to wake. This chain is Protein PDF (Pdf), found in Drosophila melanogaster (Fruit fly).